Reading from the N-terminus, the 205-residue chain is Small ribosomal subunit protein uS4 (205 aa).

An S4 RNA-binding domain is found at 94-154 (SRLDNSVYRA…TRKDGKIRKN (61 aa)).

This sequence belongs to the universal ribosomal protein uS4 family. As to quaternary structure, part of the 30S ribosomal subunit. Contacts protein S5. The interaction surface between S4 and S5 is involved in control of translational fidelity.

In terms of biological role, one of the primary rRNA binding proteins, it binds directly to 16S rRNA where it nucleates assembly of the body of the 30S subunit. Its function is as follows. With S5 and S12 plays an important role in translational accuracy. The polypeptide is Small ribosomal subunit protein uS4 (Mesomycoplasma hyopneumoniae (strain 232) (Mycoplasma hyopneumoniae)).